The primary structure comprises 363 residues: tRNA(Met) cytidine acetate ligase (363 aa).

Residues 7–20, Gly-96, Asn-152, and Arg-175 contribute to the ATP site; that span reads IAEF…HKYL.

The protein belongs to the TmcAL family.

It localises to the cytoplasm. It carries out the reaction cytidine(34) in elongator tRNA(Met) + acetate + ATP = N(4)-acetylcytidine(34) in elongator tRNA(Met) + AMP + diphosphate. In terms of biological role, catalyzes the formation of N(4)-acetylcytidine (ac(4)C) at the wobble position of elongator tRNA(Met), using acetate and ATP as substrates. First activates an acetate ion to form acetyladenylate (Ac-AMP) and then transfers the acetyl group to tRNA to form ac(4)C34. The polypeptide is tRNA(Met) cytidine acetate ligase (Streptococcus thermophilus (strain ATCC BAA-250 / LMG 18311)).